The sequence spans 192 residues: Holliday junction branch migration complex subunit RuvA (192 aa).

Residues 1–61 (MFEYLKGIVT…DTGITLYGFL (61 aa)) are domain I. Positions 62–137 (SLEDKELFLK…KLGDYVKKST (76 aa)) are domain II. The tract at residues 137–140 (TAAA) is flexible linker. The interval 141–192 (DLTPSLQDALLALVALGYTQKEVDRITPKLAKLPENTADGYVKEALALLLKK) is domain III.

The protein belongs to the RuvA family. In terms of assembly, homotetramer. Forms an RuvA(8)-RuvB(12)-Holliday junction (HJ) complex. HJ DNA is sandwiched between 2 RuvA tetramers; dsDNA enters through RuvA and exits via RuvB. An RuvB hexamer assembles on each DNA strand where it exits the tetramer. Each RuvB hexamer is contacted by two RuvA subunits (via domain III) on 2 adjacent RuvB subunits; this complex drives branch migration. In the full resolvosome a probable DNA-RuvA(4)-RuvB(12)-RuvC(2) complex forms which resolves the HJ.

It is found in the cytoplasm. In terms of biological role, the RuvA-RuvB-RuvC complex processes Holliday junction (HJ) DNA during genetic recombination and DNA repair, while the RuvA-RuvB complex plays an important role in the rescue of blocked DNA replication forks via replication fork reversal (RFR). RuvA specifically binds to HJ cruciform DNA, conferring on it an open structure. The RuvB hexamer acts as an ATP-dependent pump, pulling dsDNA into and through the RuvAB complex. HJ branch migration allows RuvC to scan DNA until it finds its consensus sequence, where it cleaves and resolves the cruciform DNA. This chain is Holliday junction branch migration complex subunit RuvA, found in Lactobacillus johnsonii (strain CNCM I-12250 / La1 / NCC 533).